The chain runs to 28 residues: Cruzioseptin-10 (28 aa).

Expressed by the skin glands.

The protein localises to the secreted. In terms of biological role, has antimicrobial activity. The sequence is that of Cruzioseptin-10 from Cruziohyla calcarifer (Splendid leaf frog).